Consider the following 481-residue polypeptide: Trigger factor (481 aa).

The region spanning 174–261 is the PPIase FKBP-type domain; the sequence is GDIAVVSFKG…LKDLKEKELP (88 aa). The segment at 435–481 is disordered; the sequence is VKEKTTKASQASKTTKAKKTTTKTTKATKTATKTTKATKTQNKKEKK. A compositionally biased stretch (low complexity) spans 456 to 474; sequence TKTTKATKTATKTTKATKT.

It belongs to the FKBP-type PPIase family. Tig subfamily.

It is found in the cytoplasm. It catalyses the reaction [protein]-peptidylproline (omega=180) = [protein]-peptidylproline (omega=0). In terms of biological role, involved in protein export. Acts as a chaperone by maintaining the newly synthesized protein in an open conformation. Functions as a peptidyl-prolyl cis-trans isomerase. The polypeptide is Trigger factor (Prochlorococcus marinus (strain MIT 9312)).